The sequence spans 404 residues: Transcription factor sem-2 (404 aa).

Residues 93-161 constitute a DNA-binding region (HMG box); sequence IKRPMNAFMV…CHMQEYPDYK (69 aa). Disordered stretches follow at residues 158-218 and 321-359; these read PDYK…QFQN and HTSP…NSAG. A compositionally biased stretch (low complexity) spans 177-199; it reads QQPAQPQAPQQQQAPPRGASPQA. 2 stretches are compositionally biased toward polar residues: residues 207-218 and 347-359; these read TDQQSETQQFQN and ASEQ…NSAG.

It is found in the nucleus. In terms of biological role, probable transcription factor required for embryogenesis, vulval development and cell fate specification of the postembryonic mesoderm (also known as the M lineage). Specifically, required for the specification of sex myoblast cells and their development into the muscles that are necessary for egg-laying. In addition, may be involved in RME GABAergic motor neuron progenitor cell fate specification. The polypeptide is Transcription factor sem-2 (Caenorhabditis elegans).